The primary structure comprises 357 residues: Membrane-bound lytic murein transglycosylase C (357 aa).

An N-terminal signal peptide occupies residues 1-15 (MKKYLLLALLPFLYA). C16 is lipidated: N-palmitoyl cysteine. A lipid anchor (S-diacylglycerol cysteine) is attached at C16.

Belongs to the transglycosylase Slt family.

It is found in the cell outer membrane. The catalysed reaction is Exolytic cleavage of the (1-&gt;4)-beta-glycosidic linkage between N-acetylmuramic acid (MurNAc) and N-acetylglucosamine (GlcNAc) residues in peptidoglycan, from either the reducing or the non-reducing ends of the peptidoglycan chains, with concomitant formation of a 1,6-anhydrobond in the MurNAc residue.. Functionally, murein-degrading enzyme. May play a role in recycling of muropeptides during cell elongation and/or cell division. This chain is Membrane-bound lytic murein transglycosylase C, found in Haemophilus influenzae (strain PittEE).